Here is a 149-residue protein sequence, read N- to C-terminus: Transcription antitermination protein NusB (149 aa).

Belongs to the NusB family.

In terms of biological role, involved in transcription antitermination. Required for transcription of ribosomal RNA (rRNA) genes. Binds specifically to the boxA antiterminator sequence of the ribosomal RNA (rrn) operons. In Chromobacterium violaceum (strain ATCC 12472 / DSM 30191 / JCM 1249 / CCUG 213 / NBRC 12614 / NCIMB 9131 / NCTC 9757 / MK), this protein is Transcription antitermination protein NusB.